The sequence spans 80 residues: Conotoxin MaIr193 (80 aa).

An N-terminal signal peptide occupies residues 1 to 22 (MKLTCMMIVAVLFLTAWTLVTA). The propeptide occupies 23–51 (DGTRDGLKNRFPKARLEMKNSEAPRSRGR). Intrachain disulfides connect cysteine 52–cysteine 69, cysteine 59–cysteine 73, and cysteine 68–cysteine 77. Proline 64 carries the post-translational modification 4-hydroxyproline.

Belongs to the conotoxin O1 superfamily. As to expression, expressed by the venom duct.

Its subcellular location is the secreted. The protein is Conotoxin MaIr193 of Conus marmoreus (Marble cone).